The following is a 206-amino-acid chain: Large ribosomal subunit protein uL4 (206 aa).

Residues 63–85 (MYKQKGTGSARHGSARAPQFRGG) form a disordered region.

Belongs to the universal ribosomal protein uL4 family. As to quaternary structure, part of the 50S ribosomal subunit.

Functionally, one of the primary rRNA binding proteins, this protein initially binds near the 5'-end of the 23S rRNA. It is important during the early stages of 50S assembly. It makes multiple contacts with different domains of the 23S rRNA in the assembled 50S subunit and ribosome. Its function is as follows. Forms part of the polypeptide exit tunnel. In Beijerinckia indica subsp. indica (strain ATCC 9039 / DSM 1715 / NCIMB 8712), this protein is Large ribosomal subunit protein uL4.